Reading from the N-terminus, the 344-residue chain is Uroporphyrinogen decarboxylase (344 aa).

Residues 29–33 (RQAGR), Asp-79, Tyr-153, Ser-208, and His-324 contribute to the substrate site.

This sequence belongs to the uroporphyrinogen decarboxylase family. Homodimer.

The protein resides in the cytoplasm. It carries out the reaction uroporphyrinogen III + 4 H(+) = coproporphyrinogen III + 4 CO2. The protein operates within porphyrin-containing compound metabolism; protoporphyrin-IX biosynthesis; coproporphyrinogen-III from 5-aminolevulinate: step 4/4. Its function is as follows. Catalyzes the decarboxylation of four acetate groups of uroporphyrinogen-III to yield coproporphyrinogen-III. The polypeptide is Uroporphyrinogen decarboxylase (Rhizorhabdus wittichii (strain DSM 6014 / CCUG 31198 / JCM 15750 / NBRC 105917 / EY 4224 / RW1) (Sphingomonas wittichii)).